The sequence spans 1024 residues: MDFTHFDDVAFAYYGLPDQSSLVSLLDHTHTFQSPTAFPQHQAMSGLAHSGLPFGTLPTGNRSQSMEGSKAPPDRTSPASNAFENPTTDEFGLASCNRADGTDLGGKPREDKAGATPAWSGLKTKAGKERKRLPLACIACRRKKVRCSGEKPACKHCLHSHIPCVYKVTTRKAAPRTNYMVMLDKRPKCMEERIIKATPKSDQEVASFVTRPVVKPAIPGAVPSSKPTKKRGAEEAFGLDLEAWAKAPSKPKIEGDDRPSSLQAQEGEENKLQHEGTEALPSEEIQEHLAEVFFDNIYGQSYHLLHKPSYLRKLKNGTLPPVLVLTVCAVAARFTSNPLGGRSWALGGQAIRMAFALQLHKDLEYDPSGRNGAKTQLSFIDREIRRRIMWACFLLDRFNSSGTDRPMFIREDTIQIPLPVKEKYFQFDMPAPTELLDGQVPHPPSPNDGQIADARENMGVAAFLIRAIALWGRIITYLSQGCKDLDPNLLWEEEPHYIKHLNDAVNLEASLPLSLNYSAENLEVHKTENAASQFLFMHICLQHNILLVSRAAMSARKQQGVHDDFFSEASQRTFSAANRISEFLREAEQSRCFVSAPFAGYCAFSSATVHILGIISCNPSMKPTAEANLTTNVKYLHKMKKYWERATQLSFLQYGDWYNRYPRGLSDAEFMDPATHKRKDSGADGVLEAKPELRSVEEYSTLPTPRRVENKDTIRAAAPKRKQSAKKQTGMPAQPGQHLDSLQSTDADAVSQERKFSGGLGLQITGAAGFNPLSASNQQNPDFSTTMSPTSPANMTPFSHYAHTPTFFPPELLSIDFGQGSNGNIDPLDRQLIYGGYSMDASTGLCGGQDMMSGLGWDTVASGAQPDGCLQGRPPNVKAGMHGQSAASSSFPAINKTNGKGKEGRGIGSHTDYGLLVIAAADDVGGDMMQYMTNSVLPSTPHKVGLNLRERFAFAYFHEPSFQAVVRPLPGYDHGQEPKGGIHYGKQFTDMFMRNYPQRITTQRLNDEGRYRLLDQESLQTMSP.

A DNA-binding region (zn(2)-C6 fungal-type) is located at residues 137 to 164; it reads CIACRRKKVRCSGEKPACKHCLHSHIPC.

Its subcellular location is the nucleus. Functionally, zn(2)-C6 fungal-type transcription factor that has a role in the establishment of the fungus within the plant and/or the progress of the disease. Regulates the expression of virulence factors such as SIX1 and SIX6. This is Zn(2)-C6 fungal-type transcription factor FTF1a from Fusarium oxysporum f. sp. lycopersici (strain 4287 / CBS 123668 / FGSC 9935 / NRRL 34936) (Fusarium vascular wilt of tomato).